A 530-amino-acid chain; its full sequence is 2,3-bisphosphoglycerate-independent phosphoglycerate mutase (530 aa).

2 residues coordinate Mn(2+): D15 and S65. S65 acts as the Phosphoserine intermediate in catalysis. Substrate is bound by residues H126, 155–156, R187, R193, 257–260, and K330; these read RD and RPDR. Mn(2+)-binding residues include D397, H401, D438, H439, and H456.

It belongs to the BPG-independent phosphoglycerate mutase family. As to quaternary structure, monomer. Requires Mn(2+) as cofactor.

It carries out the reaction (2R)-2-phosphoglycerate = (2R)-3-phosphoglycerate. The protein operates within carbohydrate degradation; glycolysis; pyruvate from D-glyceraldehyde 3-phosphate: step 3/5. Catalyzes the interconversion of 2-phosphoglycerate and 3-phosphoglycerate. This chain is 2,3-bisphosphoglycerate-independent phosphoglycerate mutase, found in Synechococcus sp. (strain JA-2-3B'a(2-13)) (Cyanobacteria bacterium Yellowstone B-Prime).